The chain runs to 471 residues: Glutamate--tRNA ligase (471 aa).

A 'HIGH' region motif is present at residues 9-19; that stretch reads PSPTGYLHVGG. The short motif at 237–241 is the 'KMSKS' region element; the sequence is KLSKR. Residue Lys-240 coordinates ATP.

Belongs to the class-I aminoacyl-tRNA synthetase family. Glutamate--tRNA ligase type 1 subfamily. As to quaternary structure, monomer.

The protein localises to the cytoplasm. The enzyme catalyses tRNA(Glu) + L-glutamate + ATP = L-glutamyl-tRNA(Glu) + AMP + diphosphate. Catalyzes the attachment of glutamate to tRNA(Glu) in a two-step reaction: glutamate is first activated by ATP to form Glu-AMP and then transferred to the acceptor end of tRNA(Glu). This is Glutamate--tRNA ligase from Pectobacterium atrosepticum (strain SCRI 1043 / ATCC BAA-672) (Erwinia carotovora subsp. atroseptica).